Consider the following 365-residue polypeptide: Peptide chain release factor 2 (365 aa).

Glutamine 249 is modified (N5-methylglutamine).

The protein belongs to the prokaryotic/mitochondrial release factor family. Post-translationally, methylated by PrmC. Methylation increases the termination efficiency of RF2.

It localises to the cytoplasm. Its function is as follows. Peptide chain release factor 2 directs the termination of translation in response to the peptide chain termination codons UGA and UAA. In Acholeplasma laidlawii (strain PG-8A), this protein is Peptide chain release factor 2.